Consider the following 635-residue polypeptide: CCR4-NOT transcription complex subunit 10 (635 aa).

Thr45 carries the phosphothreonine modification. Residues 131–165 (LVARLEALEKAMAALVATLQLQLLLATNQLNRAEA) are a coiled coil. Disordered regions lie at residues 396–416 (EERQ…QSAG) and 450–474 (SEDV…DNNF). Basic and acidic residues predominate over residues 456-470 (PEPKDPTQESWRHPQ).

The protein belongs to the CNOT10 family. In terms of assembly, component of the CCR4-NOT complex. CNOT10 and CNOT11 form a subcomplex docked to the CNOT1 scaffold.

The protein localises to the cytoplasm. The protein resides in the nucleus. Functionally, component of the CCR4-NOT complex which is one of the major cellular mRNA deadenylases and is linked to various cellular processes including bulk mRNA degradation, miRNA-mediated repression, translational repression during translational initiation and general transcription regulation. Additional complex functions may be a consequence of its influence on mRNA expression. Is not required for association of CNOT7 to the CCR4-NOT complex. This is CCR4-NOT transcription complex subunit 10 (Not10) from Drosophila melanogaster (Fruit fly).